The sequence spans 160 residues: Putative UPF0479 protein YBL113W-A (160 aa).

A run of 2 helical transmembrane segments spans residues 39 to 59 (IVFC…KVLQ) and 136 to 156 (VPMI…ISQH).

It belongs to the UPF0479 family.

Its subcellular location is the membrane. In Saccharomyces cerevisiae (strain ATCC 204508 / S288c) (Baker's yeast), this protein is Putative UPF0479 protein YBL113W-A.